The sequence spans 612 residues: Coagulation factor XII (612 aa).

The first 19 residues, 1-19 (MRALLLLGALLVSLESTVS), serve as a signal peptide directing secretion. The region spanning 42-90 (VTGEPCHFPFQYHRQLHHKCIHRGRPGPRPWCATTPNFEKDQRWAYCLE) is the Fibronectin type-II domain. Cystine bridges form between Cys-47-Cys-73, Cys-61-Cys-88, Cys-98-Cys-110, Cys-104-Cys-119, Cys-121-Cys-130, Cys-135-Cys-163, Cys-161-Cys-170, Cys-178-Cys-189, Cys-183-Cys-198, Cys-200-Cys-209, Cys-217-Cys-306, Cys-240-Cys-288, Cys-268-Cys-301, Cys-355-Cys-482, Cys-393-Cys-409, Cys-401-Cys-471, Cys-432-Cys-435, Cys-498-Cys-566, Cys-529-Cys-545, and Cys-556-Cys-587. An EGF-like 1 domain is found at 94 to 131 (VKDHCSKHNPCQKGGTCVNMPDGPRCICADHFTGKHCQ). An O-linked (Fuc) threonine glycan is attached at Thr-109. The Fibronectin type-I domain maps to 133–173 (EKCFEPQFFRFFHENEIWHRLEPAGVVKCQCKGPNAQCKPL). Residues 174 to 210 (ASQVCRTNPCLNGGSCLQAEGHRLCRCAPSFAGRLCD) form the EGF-like 2 domain. In terms of domain architecture, Kringle spans 217–306 (CYDDRDRGLS…SWNYCRLAPC (90 aa)). 2 N-linked (GlcNAc...) asparagine glycosylation sites follow: Asn-251 and Asn-282. Positions 369–611 (VVGGLVALPG…YLAWIREHTA (243 aa)) constitute a Peptidase S1 domain. The Charge relay system role is filled by His-408. Asn-429 carries an N-linked (GlcNAc...) asparagine glycan. Residue Asp-457 is the Charge relay system of the active site. The Charge relay system role is filled by Ser-560.

The protein belongs to the peptidase S1 family. In terms of assembly, interacts with HRG; the interaction, which is enhanced in the presence of zinc ions and inhibited by heparin-binding, inhibits factor XII autoactivation and contact-initiated coagulation. In terms of processing, O- and N-glycosylated.

It localises to the secreted. It catalyses the reaction Selective cleavage of Arg-|-Ile bonds in factor VII to form factor VIIa and factor XI to form factor XIa.. Activity is promoted in the presence of negatively charged surfaces. Functionally, factor XII is a serum glycoprotein that participates in the initiation of blood coagulation, fibrinolysis, and the generation of bradykinin and angiotensin. Prekallikrein is cleaved by factor XII to form kallikrein, which then cleaves factor XII first to alpha-factor XIIa and then to beta-factor XIIa. Alpha-factor XIIa activates factor XI to factor XIa. In Bos taurus (Bovine), this protein is Coagulation factor XII (F12).